Reading from the N-terminus, the 166-residue chain is Bacterial non-heme ferritin (166 aa).

The Ferritin-like diiron domain maps to 2-145 (LSKNLLEALN…THINYLTRIG (144 aa)). Fe cation-binding residues include Glu17, Glu50, His53, Glu94, and Gln127.

The protein belongs to the ferritin family. Prokaryotic subfamily.

The protein resides in the cytoplasm. The catalysed reaction is 4 Fe(2+) + O2 + 6 H2O = 4 iron(III) oxide-hydroxide + 12 H(+). In terms of biological role, iron-storage protein. The protein is Bacterial non-heme ferritin (ftnA) of Staphylococcus aureus (strain USA300).